Consider the following 657-residue polypeptide: Probable cytochrome P450 556A1 (657 aa).

A helical transmembrane segment spans residues 2–24 (FLTSILYTIIIILIFYKGLEYLI). Residues 440 to 486 (RSLPSINNNNNNNNNNNNNNNNNNNNNNNNNSNNNSINGNNKNNNRN) form a disordered region. Over residues 446-486 (NNNNNNNNNNNNNNNNNNNNNNNNNSNNNSINGNNKNNNRN) the composition is skewed to low complexity. Position 587 (cysteine 587) interacts with heme.

The protein belongs to the cytochrome P450 family. Heme serves as cofactor.

Its subcellular location is the membrane. The polypeptide is Probable cytochrome P450 556A1 (cyp556A1) (Dictyostelium discoideum (Social amoeba)).